Reading from the N-terminus, the 287-residue chain is Probable 18S rRNA (guanine-N(7))-methyltransferase (287 aa).

The segment at 214–287 (GVEGEEYEQQ…FSGRKRGPKF (74 aa)) is disordered. Residues 217 to 228 (GEEYEQQEEEDS) show a composition bias toward acidic residues. Over residues 234 to 245 (SNRKRDRRRVTK) the composition is skewed to basic residues. The span at 253–278 (KTKEWIMNKKDRQRKQGREIKNDSKF) shows a compositional bias: basic and acidic residues.

It belongs to the class I-like SAM-binding methyltransferase superfamily. BUD23/WBSCR22 family.

Its subcellular location is the nucleus. The protein localises to the nucleoplasm. The protein resides in the cytoplasm. It is found in the perinuclear region. The catalysed reaction is a guanosine in 18S rRNA + S-adenosyl-L-methionine = an N(7)-methylguanosine in 18S rRNA + S-adenosyl-L-homocysteine. In terms of biological role, S-adenosyl-L-methionine-dependent methyltransferase that specifically methylates the N(7) position of a guanine in 18S rRNA. Important for biogenesis end export of the 40S ribosomal subunit independent on its methyltransferase activity. S-adenosyl-L-methionine-dependent methyltransferase that specifically methylates the N(7) position of a guanine in 18S rRNA. Requires the methyltransferase adapter protein TRM112 for full rRNA methyltransferase activity. Involved in the pre-rRNA processing steps leading to small-subunit rRNA production independently of its RNA-modifying catalytic activity. Important for biogenesis end export of the 40S ribosomal subunit independent on its methyltransferase activity. This Dictyostelium discoideum (Social amoeba) protein is Probable 18S rRNA (guanine-N(7))-methyltransferase.